Here is a 338-residue protein sequence, read N- to C-terminus: Phenylalanine--tRNA ligase alpha subunit (338 aa).

Glu-253 is a binding site for Mg(2+).

This sequence belongs to the class-II aminoacyl-tRNA synthetase family. Phe-tRNA synthetase alpha subunit type 1 subfamily. Tetramer of two alpha and two beta subunits. It depends on Mg(2+) as a cofactor.

The protein resides in the cytoplasm. The enzyme catalyses tRNA(Phe) + L-phenylalanine + ATP = L-phenylalanyl-tRNA(Phe) + AMP + diphosphate + H(+). This Geobacter metallireducens (strain ATCC 53774 / DSM 7210 / GS-15) protein is Phenylalanine--tRNA ligase alpha subunit.